The sequence spans 432 residues: Lecithin-cholesterol acyltransferase-like 1 (432 aa).

The helical transmembrane segment at 7-29 (HYSVVIAILVVVTMTSMCQAVGS) threads the bilayer. The Acyl-ester intermediate role is filled by serine 209. Residues aspartate 374 and histidine 400 each act as charge relay system in the active site.

The protein belongs to the AB hydrolase superfamily. Lipase family.

The protein localises to the membrane. The chain is Lecithin-cholesterol acyltransferase-like 1 (LCAT1) from Arabidopsis thaliana (Mouse-ear cress).